The sequence spans 445 residues: Phosphoglucosamine mutase (445 aa).

The active-site Phosphoserine intermediate is the serine 102. Positions 102, 241, 243, and 245 each coordinate Mg(2+). The residue at position 102 (serine 102) is a Phosphoserine.

The protein belongs to the phosphohexose mutase family. Mg(2+) is required as a cofactor. Activated by phosphorylation.

The enzyme catalyses alpha-D-glucosamine 1-phosphate = D-glucosamine 6-phosphate. Catalyzes the conversion of glucosamine-6-phosphate to glucosamine-1-phosphate. This Cronobacter sakazakii (strain ATCC BAA-894) (Enterobacter sakazakii) protein is Phosphoglucosamine mutase.